A 313-amino-acid chain; its full sequence is FAM172 family protein homolog Y75B8A.31 (313 aa).

The interval 293–313 (VKSENSKESDDEAPKSKKICV) is disordered. The span at 296–307 (ENSKESDDEAPK) shows a compositional bias: basic and acidic residues.

The protein belongs to the FAM172 family.

This is FAM172 family protein homolog Y75B8A.31 from Caenorhabditis elegans.